Consider the following 92-residue polypeptide: Small archaeal modifier protein 3 (92 aa).

Glycyl lysine isopeptide (Lys-Gly) (interchain with G-Cter in SAMP3) cross-links involve residues Lys-18, Lys-55, and Lys-62. Gly-92 carries the glycyl adenylate; alternate modification. Residue Gly-92 forms a Glycyl lysine isopeptide (Gly-Lys) (interchain with K-? in acceptor proteins); alternate linkage.

Monomer. Post-translationally, the C-terminal glycine is likely acyl-adenylated (-COAMP) by UbaA.

Its function is as follows. Functions as a protein modifier covalently attached to lysine residues of substrate proteins. The protein modification process is termed sampylation and involves the formation of an isopeptide bond between the SAMP3 C-terminal glycine carboxylate and the epsilon-amino group of lysine residues on target proteins. Seems to be able to form polymeric chains with itself at Lys-18, Lys-55 and Lys-62, similar to ubiquitin and other ubiquitin-like proteins. SAMP3 appears not to serve as a proteolytic signal in the cell to target proteins for degradation by proteasomes. May regulate molybdenum cofactor (MoCo) biosynthesis by inhibiting the activity of MPT synthase MoaE under aerobic conditions, providing a hierarchy of oxygen use prior to that of alternative electron acceptors such as DMSO. The protein is Small archaeal modifier protein 3 (samp3) of Haloferax volcanii (strain ATCC 29605 / DSM 3757 / JCM 8879 / NBRC 14742 / NCIMB 2012 / VKM B-1768 / DS2) (Halobacterium volcanii).